The primary structure comprises 359 residues: Fructose-bisphosphate aldolase 1 (359 aa).

S50 is a binding site for D-glyceraldehyde 3-phosphate. D83 serves as the catalytic Proton donor. Zn(2+)-binding residues include H84, D105, E142, and H198. G199 is a binding site for dihydroxyacetone phosphate. H232 lines the Zn(2+) pocket. Residues 233 to 235 (GSS) and 275 to 278 (NIDT) contribute to the dihydroxyacetone phosphate site.

Belongs to the class II fructose-bisphosphate aldolase family. As to quaternary structure, homodimer. Requires Zn(2+) as cofactor.

It carries out the reaction beta-D-fructose 1,6-bisphosphate = D-glyceraldehyde 3-phosphate + dihydroxyacetone phosphate. The protein operates within carbohydrate biosynthesis; Calvin cycle. It functions in the pathway carbohydrate degradation; glycolysis; D-glyceraldehyde 3-phosphate and glycerone phosphate from D-glucose: step 4/4. In terms of biological role, catalyzes the aldol condensation of dihydroxyacetone phosphate (DHAP or glycerone-phosphate) with glyceraldehyde 3-phosphate (G3P) to form fructose 1,6-bisphosphate (FBP) in gluconeogenesis and the reverse reaction in glycolysis. In Cereibacter sphaeroides (Rhodobacter sphaeroides), this protein is Fructose-bisphosphate aldolase 1 (cfxA).